We begin with the raw amino-acid sequence, 364 residues long: Histidinol-phosphate aminotransferase 1 (364 aa).

The residue at position 211 (Lys-211) is an N6-(pyridoxal phosphate)lysine.

This sequence belongs to the class-II pyridoxal-phosphate-dependent aminotransferase family. Histidinol-phosphate aminotransferase subfamily. As to quaternary structure, homodimer. Pyridoxal 5'-phosphate serves as cofactor.

The enzyme catalyses L-histidinol phosphate + 2-oxoglutarate = 3-(imidazol-4-yl)-2-oxopropyl phosphate + L-glutamate. Its pathway is amino-acid biosynthesis; L-histidine biosynthesis; L-histidine from 5-phospho-alpha-D-ribose 1-diphosphate: step 7/9. The protein is Histidinol-phosphate aminotransferase 1 of Legionella pneumophila (strain Paris).